A 458-amino-acid chain; its full sequence is 5-hydroxytryptamine receptor 2C (458 aa).

Residues 1 to 32 (MVNLRNAVHSFLVHLIGLLVWQCDISVSPVAA) form the signal peptide. The Extracellular segment spans residues 33 to 55 (IVTDIFNTSDGGRFKFPDGVQNW). The helical transmembrane segment at 56 to 80 (PALSIVVIIIMTIGGNILVIMAVSM) threads the bilayer. Over 81–86 (EKKLHN) the chain is Cytoplasmic. The chain crosses the membrane as a helical span at residues 87 to 111 (ATNYFLMSLAIADMLVGLLVMPLSL). Topologically, residues 112–128 (LAILYDYVWPLPRYLCP) are extracellular. An intrachain disulfide couples Cys127 to Cys207. Residues 129-151 (VWISLDVLFSTASIMHLCAISLD) traverse the membrane as a helical segment. An ergotamine-binding site is contributed by Thr139. The DRY motif; important for ligand-induced conformation changes motif lies at 151 to 153 (DRY). The Cytoplasmic portion of the chain corresponds to 152-167 (RYVAIRNPIEHSRFNS). The helical transmembrane segment at 168-189 (RTKAIMKIAIVWAISIGVSVPI) threads the bilayer. The Extracellular portion of the chain corresponds to 190 to 213 (PVIGLRDERKVFVNNTTCVLNDPN). Residue Leu209 participates in ergotamine binding. The helical transmembrane segment at 214–236 (FVLIGSFVAFFIPLTIMVITYCL) threads the bilayer. The Cytoplasmic segment spans residues 237-311 (TIYVLRRQAL…AINNERKASK (75 aa)). The segment at 274–301 (EENSANPNQDQNARRRKKKERRPRGTMQ) is disordered. A compositionally biased stretch (basic residues) spans 287–297 (RRRKKKERRPR). A helical membrane pass occupies residues 312 to 336 (VLGIVFFVFLIMWCPFFITNILSVL). Cysteines 337 and 341 form a disulfide. The Extracellular portion of the chain corresponds to 337 to 347 (CEKSCNQKLME). The helical transmembrane segment at 348 to 370 (KLLNVFVWIGYVCSGINPLVYTL) threads the bilayer. The NPxxY motif; important for ligand-induced conformation changes and signaling motif lies at 364 to 368 (NPLVY). The Cytoplasmic portion of the chain corresponds to 371-458 (FNKIYRRAFS…SVVSERISSV (88 aa)). The PDZ-binding signature appears at 456-458 (SSV).

It belongs to the G-protein coupled receptor 1 family. As to quaternary structure, interacts with MPDZ. Interacts with ARRB2. Interacts with MPP3; this interaction stabilizes the receptor at the plasma membrane and prevents the desensitization of the HTR2C receptor-mediated calcium response.

Its subcellular location is the cell membrane. Its function is as follows. G-protein coupled receptor for 5-hydroxytryptamine (serotonin). Also functions as a receptor for various drugs and psychoactive substances, including ergot alkaloid derivatives, 1-2,5,-dimethoxy-4-iodophenyl-2-aminopropane (DOI) and lysergic acid diethylamide (LSD). Ligand binding causes a conformation change that triggers signaling via guanine nucleotide-binding proteins (G proteins) and modulates the activity of downstream effectors. HTR2C is coupled to G(q)/G(11) G alpha proteins and activates phospholipase C-beta, releasing diacylglycerol (DAG) and inositol 1,4,5-trisphosphate (IP3) second messengers that modulate the activity of phosphatidylinositol 3-kinase and promote the release of Ca(2+) ions from intracellular stores, respectively. Beta-arrestin family members inhibit signaling via G proteins and mediate activation of alternative signaling pathways. Regulates neuronal activity via the activation of short transient receptor potential calcium channels in the brain, and thereby modulates the activation of pro-opiomelanocortin neurons and the release of CRH that then regulates the release of corticosterone. Plays a role in the regulation of appetite and eating behavior, responses to anxiogenic stimuli and stress. Plays a role in insulin sensitivity and glucose homeostasis. The sequence is that of 5-hydroxytryptamine receptor 2C from Pan troglodytes (Chimpanzee).